Here is a 94-residue protein sequence, read N- to C-terminus: Small ribosomal subunit protein bS6 (94 aa).

This sequence belongs to the bacterial ribosomal protein bS6 family.

Binds together with bS18 to 16S ribosomal RNA. The polypeptide is Small ribosomal subunit protein bS6 (Clostridium botulinum (strain Kyoto / Type A2)).